A 53-amino-acid chain; its full sequence is uncharacterized protein (53 aa).

The signal sequence occupies residues 1–19; that stretch reads MKLLTILILFYSFFMNLQA.

This is an uncharacterized protein from Autographa californica nuclear polyhedrosis virus (AcMNPV).